The primary structure comprises 604 residues: UvrABC system protein C (604 aa).

In terms of domain architecture, GIY-YIG spans aspartate 15–isoleucine 92. The 36-residue stretch at glutamate 197–threonine 232 folds into the UVR domain.

The protein belongs to the UvrC family. In terms of assembly, interacts with UvrB in an incision complex.

Its subcellular location is the cytoplasm. In terms of biological role, the UvrABC repair system catalyzes the recognition and processing of DNA lesions. UvrC both incises the 5' and 3' sides of the lesion. The N-terminal half is responsible for the 3' incision and the C-terminal half is responsible for the 5' incision. The sequence is that of UvrABC system protein C from Lactiplantibacillus plantarum (strain ATCC BAA-793 / NCIMB 8826 / WCFS1) (Lactobacillus plantarum).